Consider the following 396-residue polypeptide: MTRRLFTSESVTEGHPDKIADQISDAVLDAILAQDPQARVACETAVTTGLVLVIGEITTSCYVDIPKVVRETIREIGYTRAKYGFDGDTCAVITSIDEQSPDIALGVNRALEAKTGEMTDDEIEAIGAGDQGMMFGYATNETPELMPMPISLAHRLARRLAEVRKSRLLPYLRPDGKTQVTVEYDGDKPVRVDTIVVSTQHHPDVSQEEIRKDIIEHVVKPVIPEHLLDENTRYFVNPTGRFVIGGPQGDAGLTGRKIIVDTYGGMARHGGGAFSGKDPTKVDRSAAYAARYVAKNIVAAGIADKIEIQLAYAIGVAKPVSIMVDTFGTGKIADEKIVELIKKHFDLRPAGIIRMLDLRRPIYKQTAAYGHFGRTDIDLPWERIDKAEILRMEAGL.

H15 contributes to the ATP binding site. D17 contributes to the Mg(2+) binding site. E43 serves as a coordination point for K(+). L-methionine is bound by residues E56 and Q99. The tract at residues 99-109 (QSPDIALGVNR) is flexible loop. ATP is bound by residues 175 to 177 (DGK), 241 to 242 (RF), D250, 256 to 257 (RK), A273, and K277. D250 serves as a coordination point for L-methionine. Position 281 (K281) interacts with L-methionine.

The protein belongs to the AdoMet synthase family. Homotetramer; dimer of dimers. Requires Mg(2+) as cofactor. The cofactor is K(+).

Its subcellular location is the cytoplasm. The catalysed reaction is L-methionine + ATP + H2O = S-adenosyl-L-methionine + phosphate + diphosphate. Its pathway is amino-acid biosynthesis; S-adenosyl-L-methionine biosynthesis; S-adenosyl-L-methionine from L-methionine: step 1/1. Functionally, catalyzes the formation of S-adenosylmethionine (AdoMet) from methionine and ATP. The overall synthetic reaction is composed of two sequential steps, AdoMet formation and the subsequent tripolyphosphate hydrolysis which occurs prior to release of AdoMet from the enzyme. This Carboxydothermus hydrogenoformans (strain ATCC BAA-161 / DSM 6008 / Z-2901) protein is S-adenosylmethionine synthase.